The following is a 178-amino-acid chain: Large ribosomal subunit protein uL6 (178 aa).

This sequence belongs to the universal ribosomal protein uL6 family. As to quaternary structure, part of the 50S ribosomal subunit.

In terms of biological role, this protein binds to the 23S rRNA, and is important in its secondary structure. It is located near the subunit interface in the base of the L7/L12 stalk, and near the tRNA binding site of the peptidyltransferase center. In Helicobacter pylori (strain HPAG1), this protein is Large ribosomal subunit protein uL6.